The chain runs to 156 residues: Small ribosomal subunit protein uS7 (156 aa).

The protein belongs to the universal ribosomal protein uS7 family. As to quaternary structure, part of the 30S ribosomal subunit. Contacts proteins S9 and S11.

In terms of biological role, one of the primary rRNA binding proteins, it binds directly to 16S rRNA where it nucleates assembly of the head domain of the 30S subunit. Is located at the subunit interface close to the decoding center, probably blocks exit of the E-site tRNA. The polypeptide is Small ribosomal subunit protein uS7 (Pasteurella multocida (strain Pm70)).